We begin with the raw amino-acid sequence, 446 residues long: Glycerol-3-phosphate acyltransferase 3 (446 aa).

The next 3 membrane-spanning stretches (helical) occupy residues 25 to 45 (LPSA…VLVK), 142 to 162 (LRLT…LLPL), and 164 to 184 (FTLA…VGQL). The HXXXXD motif signature appears at 232-237 (HTSPID). A helical membrane pass occupies residues 352 to 372 (IVSYLLRIMTSWAIVCHVWYM). Positions 418-446 (FKEEQQKNYSKMLVRNGSQGNLPAGTESD) are disordered.

The protein belongs to the 1-acyl-sn-glycerol-3-phosphate acyltransferase family.

It localises to the endoplasmic reticulum membrane. The enzyme catalyses sn-glycerol 3-phosphate + an acyl-CoA = a 1-acyl-sn-glycero-3-phosphate + CoA. It catalyses the reaction a 1-acyl-sn-glycero-3-phosphate + an acyl-CoA = a 1,2-diacyl-sn-glycero-3-phosphate + CoA. It carries out the reaction dodecanoyl-CoA + sn-glycerol 3-phosphate = 1-dodecanoyl-sn-glycerol 3-phosphate + CoA. The catalysed reaction is sn-glycerol 3-phosphate + hexadecanoyl-CoA = 1-hexadecanoyl-sn-glycero-3-phosphate + CoA. The enzyme catalyses sn-glycerol 3-phosphate + (9Z)-octadecenoyl-CoA = 1-(9Z-octadecenoyl)-sn-glycero-3-phosphate + CoA. It catalyses the reaction (9Z,12Z)-octadecadienoyl-CoA + sn-glycerol 3-phosphate = 1-(9Z,12Z)-octadecadienoyl-sn-glycero-3-phosphate + CoA. It carries out the reaction 1-tetradecanoyl-sn-glycerol 3-phosphate + (9Z)-octadecenoyl-CoA = 1-tetradecanoyl-2-(9Z)-octadecenoyl-sn-glycero-3-phosphate + CoA. The catalysed reaction is 1-hexadecanoyl-sn-glycero-3-phosphate + (9Z)-octadecenoyl-CoA = 1-hexadecanoyl-2-(9Z-octadecenoyl)-sn-glycero-3-phosphate + CoA. The enzyme catalyses 1-(9Z-octadecenoyl)-sn-glycero-3-phosphate + (9Z)-octadecenoyl-CoA = 1,2-di-(9Z-octadecenoyl)-sn-glycero-3-phosphate + CoA. It catalyses the reaction 1-(6Z,9Z,12Z-octadecatrienoyl)-sn-glycero-3-phosphate + (9Z)-octadecenoyl-CoA = (6Z,9Z,12Z)-octadecatrienoyl-2-(9Z)-octadecenoyl-sn-glycero-3-phosphate + CoA. It carries out the reaction 1-(9Z,12Z,15Z)-octadecatrienoyl-sn-glycero-3-phosphate + (9Z)-octadecenoyl-CoA = 1-(9Z,12Z,15Z)-octadecatrienoyl-2-(9Z)-octadecenoyl-sn-glycero-3-phosphate + CoA. The catalysed reaction is 1-(9Z-octadecenoyl)-sn-glycero-3-phosphate + tetradecanoyl-CoA = 1-(9Z)-octadecenoyl-2-tetradecanoyl-sn-glycero-3-phosphate + CoA. The enzyme catalyses 1-(9Z-octadecenoyl)-sn-glycero-3-phosphate + hexadecanoyl-CoA = 1-(9Z)-octadecenoyl-2-hexadecanoyl-sn-glycero-3-phosphate + CoA. It catalyses the reaction 1-(9Z-octadecenoyl)-sn-glycero-3-phosphate + octadecanoyl-CoA = 1-(9Z-octadecenoyl)-2-octadecanoyl-sn-glycero-3-phosphate + CoA. It carries out the reaction 1-(9Z-octadecenoyl)-sn-glycero-3-phosphate + (9Z,12Z)-octadecadienoyl-CoA = 1-(9Z)-octadecenoyl-2-(9Z,12Z)-octadecadienoyl-sn-glycero-3-phosphate + CoA. The catalysed reaction is 1-(5Z,8Z,11Z,14Z-eicosatetraenoyl)-sn-glycero-3-phosphate + (9Z)-octadecenoyl-CoA = 1-(5Z,8Z,11Z,14Z)-eicosatetraenoyl-2-(9Z)-octadecenoyl-sn-glycero-3-phosphate + CoA. It functions in the pathway glycerolipid metabolism; triacylglycerol biosynthesis. The protein operates within phospholipid metabolism; CDP-diacylglycerol biosynthesis; CDP-diacylglycerol from sn-glycerol 3-phosphate: step 1/3. Functionally, converts glycerol-3-phosphate to 1-acyl-sn-glycerol-3-phosphate (lysophosphatidic acid or LPA) by incorporating an acyl moiety at the sn-1 position of the glycerol backbone. Also converts LPA into 1,2-diacyl-sn-glycerol-3-phosphate (phosphatidic acid or PA) by incorporating an acyl moiety at the sn-2 position of the glycerol backbone. Protects cells against lipotoxicity. This chain is Glycerol-3-phosphate acyltransferase 3, found in Gallus gallus (Chicken).